Reading from the N-terminus, the 376-residue chain is Chaperone protein DnaJ (376 aa).

Residues 5–70 (DYYETLGVQK…EKRAAYDQYG (66 aa)) enclose the J domain. The CR-type zinc finger occupies 133-211 (GTTKDIKINT…CHGDGRVHKK (79 aa)). Zn(2+)-binding residues include Cys146, Cys149, Cys163, Cys166, Cys185, Cys188, Cys199, and Cys202. CXXCXGXG motif repeat units follow at residues 146–153 (CDHCDGSG), 163–170 (CPTCHGHG), 185–192 (CPTCQGSG), and 199–206 (CKHCHGDG).

Belongs to the DnaJ family. Homodimer. Zn(2+) serves as cofactor.

The protein localises to the cytoplasm. Participates actively in the response to hyperosmotic and heat shock by preventing the aggregation of stress-denatured proteins and by disaggregating proteins, also in an autonomous, DnaK-independent fashion. Unfolded proteins bind initially to DnaJ; upon interaction with the DnaJ-bound protein, DnaK hydrolyzes its bound ATP, resulting in the formation of a stable complex. GrpE releases ADP from DnaK; ATP binding to DnaK triggers the release of the substrate protein, thus completing the reaction cycle. Several rounds of ATP-dependent interactions between DnaJ, DnaK and GrpE are required for fully efficient folding. Also involved, together with DnaK and GrpE, in the DNA replication of plasmids through activation of initiation proteins. In Mannheimia succiniciproducens (strain KCTC 0769BP / MBEL55E), this protein is Chaperone protein DnaJ.